The chain runs to 413 residues: Probable alpha-tubulin polyglutamylase Ttll1 (413 aa).

The region spanning A2–T370 is the TTL domain. Residues S184–I187, K197, and D199 each bind ATP.

The protein belongs to the tubulin polyglutamylase family.

It is found in the cytoplasm. It localises to the cytoskeleton. The protein localises to the cilium basal body. Its subcellular location is the contractile vacuole. Functionally, probable tubulin polyglutamylase with a strong preference for alpha-tubulin. Modifies alpha-tubulin, generating side chains of glutamate on the gamma-carboxyl groups of specific glutamate residues within the C-terminal tail of alpha-tubulin. In Tetrahymena thermophila (strain SB210), this protein is Probable alpha-tubulin polyglutamylase Ttll1 (Ttll1).